The primary structure comprises 497 residues: Zinc finger protein ZIC 2-B (497 aa).

2 disordered regions span residues 58–107 (HMGA…TSQA) and 143–180 (SAAAGGGQHGLFGPPAGSLHHHPHHHHQLSHGEHPQGH). Over residues 66–88 (PGGGSGGGSGGGGGAGPNGGAGA) the composition is skewed to gly residues. Over residues 97–107 (PGQTSAFTSQA) the composition is skewed to polar residues. The span at 161–171 (LHHHPHHHHQL) shows a compositional bias: basic residues. The segment at 273-308 (LICKWIDPEQLNNPKKSCNKTFSTMHELVTHMSVEH) adopts a C2H2-type 1; atypical zinc-finger fold. Residues 317–344 (HICFWEECAREGKPFKAKYKLVNHIRVH) form a C2H2-type 2; atypical zinc finger. 3 C2H2-type zinc fingers span residues 350–374 (FPCPFPGCGKVFARSENLKIHKRTH), 380–404 (FQCEFEGCDRRFANSSDRKKHMHVH), and 410–432 (YLCKMCDKSYTHPSSLRKHMKVH). The disordered stretch occupies residues 423 to 473 (SSLRKHMKVHESSPQGSESSPAASSGYESSTPPGLVSPNSETQNPNLSPAA). Positions 434–452 (SSPQGSESSPAASSGYESS) are enriched in low complexity. A compositionally biased stretch (polar residues) spans 459–469 (SPNSETQNPNL).

Belongs to the GLI C2H2-type zinc-finger protein family.

It is found in the nucleus. The protein localises to the cytoplasm. Functionally, transcriptional repressor that inhibits neurogenesis and induces neural and neural crest differentiation. Regulates anteroposterior patterning in early development by inhibiting expression of the nodal genes through the inhibition of vegt. Required for gastrulation movements and for proper anterior neural and axial development. May also act as a transcriptional activator. May bind to the minimal GLI-consensus sequence 5'-TGGGTGGTC-3'. This Xenopus laevis (African clawed frog) protein is Zinc finger protein ZIC 2-B (zic2-b).